Reading from the N-terminus, the 1197-residue chain is Protein timeless homolog (1197 aa).

The interval 1 to 309 (MDLYMMNCEL…GLHNLQNYSS (309 aa)) is required for homodimerization and for interaction with CRY1 and CHEK1. Ser-281 bears the Phosphoserine mark. Disordered stretches follow at residues 647–674 (STPLPRQQEPEEGDAEEEEEEEEEEELQ) and 943–1002 (RKKL…SAEN). The span at 656-673 (PEEGDAEEEEEEEEEEEL) shows a compositional bias: acidic residues. Residues 810–949 (SHRAPLWSPE…KKRRKKLAPS (140 aa)) are DNA-binding domain. Residues 963–985 (QEDPEEEDEHLPEDESEDEESEE) show a composition bias toward acidic residues. Positions 986–999 (GLPSGQGQGSSSLS) are enriched in low complexity. Residues 997–1095 (SLSAENLGES…TQLRRVAASL (99 aa)) are interaction with PARP1. A phosphoserine mark is found at Ser-1071 and Ser-1084. The required for nuclear localization stretch occupies residues 1079 to 1197 (IPAKLSSTQL…KRFQIEDEDD (119 aa)). Thr-1086 carries the post-translational modification Phosphothreonine. Positions 1088–1197 (LRRVAASLSQ…KRFQIEDEDD (110 aa)) are disordered. Composition is skewed to acidic residues over residues 1099–1109 (ENEEEREEEPE) and 1143–1153 (TEEEATGEEEW). Ser-1165 is subject to Phosphoserine.

It belongs to the timeless family. In terms of assembly, monomer. Homodimer or homomultimer. Component of the circadian core oscillator, which includes the CRY proteins, CLOCK or NPAS2, ARTNL/BMAL1 or ARTNL2/BMAL2, CSKN1D and/or CSNK1E, TIMELESS, and the PER proteins. Interacts directly with PER2; the interaction with PER2 is via its second PAS domain. Interacts directly with PER1 and PER3. Interacts with CRY1. Interacts with CRY2. Interacts with CHEK1, ATR and ATRIP. Interacts with CLSPN. Interacts (via N-terminus) with TIPIN. The TIMELESS-TIPIN heterodimer binds preferably to guanine-rich quadruplex-forming (G4) DNA structures. Associates with the MCM2-7 complex. Interacts with DNA polymerases alpha, delta and epsilon. Interacts with DDX11; this interaction increases recruitment of both proteins onto chromatin in response to replication stress induction by hydroxyurea. Interacts with PARP1; interaction is direct and independent of poly-ADP-ribose. As to expression, predominantly and robustly expressed in proliferative organs (spleen, thymus, intestine and testis) compared to those more differentiated such as kidney and liver (at protein level). Expressed in all tissues examined including brain, heart, lung, liver, skeletal muscle, kidney, placenta, pancreas, spleen, thymus and testis. Strongly expressed in the suprachiasmatic nucleus (SCN) and pars tuberalis, moderately in the cingulate cortex, pyrimidal cell layer of the piriform cortex, periventricular part of the caudate putamen, and granular layer of the cerebellum, and weakly in the cerebral cortex, gyrus dentatus, hippocampus and thalamic nuclei. In embryonic kidney, expression is highest in regions of active ureteric bud cell branching.

It localises to the nucleus. The protein localises to the chromosome. Plays an important role in the control of DNA replication, maintenance of replication fork stability, maintenance of genome stability throughout normal DNA replication, DNA repair and in the regulation of the circadian clock. Required to stabilize replication forks during DNA replication by forming a complex with TIPIN: this complex regulates DNA replication processes under both normal and stress conditions, stabilizes replication forks and influences both CHEK1 phosphorylation and the intra-S phase checkpoint in response to genotoxic stress. During DNA replication, inhibits the CMG complex ATPase activity and activates DNA polymerases catalytic activities, coupling DNA unwinding and DNA synthesis. TIMELESS promotes TIPIN nuclear localization. Plays a role in maintaining processive DNA replication past genomic guanine-rich DNA sequences that form G-quadruplex (G4) structures, possibly together with DDX1. Involved in cell survival after DNA damage or replication stress by promoting DNA repair. In response to double-strand breaks (DSBs), accumulates at DNA damage sites and promotes homologous recombination repair via its interaction with PARP1. May be specifically required for the ATR-CHEK1 pathway in the replication checkpoint induced by hydroxyurea or ultraviolet light. Involved in the determination of period length and in the DNA damage-dependent phase advancing of the circadian clock. Negatively regulates CLOCK|NPAS2-ARTNL/BMAL1|ARTNL2/BMAL2-induced transactivation of PER1 possibly via translocation of PER1 into the nucleus. May also play an important role in epithelial cell morphogenesis and formation of branching tubules. In Mus musculus (Mouse), this protein is Protein timeless homolog.